A 227-amino-acid polypeptide reads, in one-letter code: UPF0758 protein PG_0894 (227 aa).

The region spanning 104–227 (SITDSRMAYR…YFSFADEGLL (124 aa)) is the MPN domain. Zn(2+) is bound by residues His-175, His-177, and Asp-188. Positions 175–188 (HNHPSGTVRPSEQD) match the JAMM motif motif.

It belongs to the UPF0758 family.

The chain is UPF0758 protein PG_0894 from Porphyromonas gingivalis (strain ATCC BAA-308 / W83).